A 270-amino-acid chain; its full sequence is 3-methyl-2-oxobutanoate hydroxymethyltransferase (270 aa).

Mg(2+) contacts are provided by Asp43 and Asp82. Residues 43–44 (DS), Asp82, and Lys112 each bind 3-methyl-2-oxobutanoate. Glu114 is a binding site for Mg(2+). The Proton acceptor role is filled by Glu179.

Belongs to the PanB family. Homodecamer; pentamer of dimers. It depends on Mg(2+) as a cofactor.

The protein localises to the cytoplasm. The catalysed reaction is 3-methyl-2-oxobutanoate + (6R)-5,10-methylene-5,6,7,8-tetrahydrofolate + H2O = 2-dehydropantoate + (6S)-5,6,7,8-tetrahydrofolate. It functions in the pathway cofactor biosynthesis; (R)-pantothenate biosynthesis; (R)-pantoate from 3-methyl-2-oxobutanoate: step 1/2. In terms of biological role, catalyzes the reversible reaction in which hydroxymethyl group from 5,10-methylenetetrahydrofolate is transferred onto alpha-ketoisovalerate to form ketopantoate. The chain is 3-methyl-2-oxobutanoate hydroxymethyltransferase from Oceanobacillus iheyensis (strain DSM 14371 / CIP 107618 / JCM 11309 / KCTC 3954 / HTE831).